The following is a 191-amino-acid chain: Peptidyl-tRNA hydrolase (191 aa).

Residue Y17 coordinates tRNA. H22 acts as the Proton acceptor in catalysis. Residues Y68, N70, and N116 each coordinate tRNA.

The protein belongs to the PTH family. As to quaternary structure, monomer.

Its subcellular location is the cytoplasm. The catalysed reaction is an N-acyl-L-alpha-aminoacyl-tRNA + H2O = an N-acyl-L-amino acid + a tRNA + H(+). Its function is as follows. Hydrolyzes ribosome-free peptidyl-tRNAs (with 1 or more amino acids incorporated), which drop off the ribosome during protein synthesis, or as a result of ribosome stalling. Functionally, catalyzes the release of premature peptidyl moieties from peptidyl-tRNA molecules trapped in stalled 50S ribosomal subunits, and thus maintains levels of free tRNAs and 50S ribosomes. This Mycobacterium marinum (strain ATCC BAA-535 / M) protein is Peptidyl-tRNA hydrolase.